Reading from the N-terminus, the 88-residue chain is Hemotin (88 aa).

Residues 1-14 (MDCFKVFEVVFQSE) lie on the Lumenal side of the membrane. The helical transmembrane segment at 15 to 37 (INPLLLIPAVATIALTLCCYCYH) threads the bilayer. Topologically, residues 38–88 (GYQWIRDRRTARIEEQQAQLPLPLSRISITPGCSMVATTKLTHSRNSVDIY) are cytoplasmic.

Interacts with 14-3-3zeta. As to expression, expressed in hemocytes.

The protein resides in the early endosome membrane. Negatively regulates early endosome maturation by binding to and repressing the activity of 14-3-3zeta which prevents the 14-3-3zeta-mediated activation of phosphoinositide 3-kinase Pi3K68D. This, in turn, inhibits the Pi3K68D-mediated conversion of phosphatidylinositol to phosphatidylinositol-3-phosphate and prevents progression of early endosomes through the maturation process which regulates subsequent steps of phagocytic processing. In Drosophila melanogaster (Fruit fly), this protein is Hemotin.